The following is a 315-amino-acid chain: Ribosomal RNA small subunit methyltransferase H (315 aa).

S-adenosyl-L-methionine is bound by residues 33 to 35 (GGH), aspartate 52, phenylalanine 84, aspartate 106, and glutamine 113. The disordered stretch occupies residues 295–315 (SDELEENNRSHSAKLRVAEKL).

Belongs to the methyltransferase superfamily. RsmH family.

It localises to the cytoplasm. It carries out the reaction cytidine(1402) in 16S rRNA + S-adenosyl-L-methionine = N(4)-methylcytidine(1402) in 16S rRNA + S-adenosyl-L-homocysteine + H(+). Specifically methylates the N4 position of cytidine in position 1402 (C1402) of 16S rRNA. The sequence is that of Ribosomal RNA small subunit methyltransferase H from Lactobacillus gasseri (strain ATCC 33323 / DSM 20243 / BCRC 14619 / CIP 102991 / JCM 1131 / KCTC 3163 / NCIMB 11718 / NCTC 13722 / AM63).